Consider the following 404-residue polypeptide: N-acetylglucosamine-6-phosphate deacetylase (404 aa).

Residue Glu-143 coordinates a divalent metal cation. Substrate is bound at residue 154–155; sequence AH. His-211 and His-232 together coordinate a divalent metal cation. Substrate-binding positions include 235-236, Arg-243, and 269-272; these read NA and DGIH. Residue Asp-294 is the Proton donor/acceptor of the active site. Substrate is bound at residue 328–330; that stretch reads LSG.

This sequence belongs to the metallo-dependent hydrolases superfamily. NagA family. It depends on a divalent metal cation as a cofactor.

It carries out the reaction N-acetyl-D-glucosamine 6-phosphate + H2O = D-glucosamine 6-phosphate + acetate. It functions in the pathway amino-sugar metabolism; N-acetylneuraminate degradation. Its function is as follows. Hydrolyzes the N-glycolyl group from N-glycolylglucosamine 6-phosphate (GlcNGc-6-P) in the N-glycolylneuraminic acid (Neu5Gc) degradation pathway. The chain is N-acetylglucosamine-6-phosphate deacetylase (amdhd2) from Danio rerio (Zebrafish).